The primary structure comprises 558 residues: Nucleoprotein (558 aa).

The binding site for the cap structure m7GTP stretch occupies residues 54–237 (MRKERRDDKD…ITEQQSSINI (184 aa)). Residues D382 and E384 each contribute to the Mn(2+) site. Positions 392, 499, 502, and 518 each coordinate Zn(2+). Position 522 (D522) interacts with Mn(2+).

Belongs to the arenaviridae nucleocapsid protein family. In terms of assembly, homomultimerizes to form the nucleocapsid. Binds to viral genomic RNA. Interacts with glycoprotein G2. Interacts with protein Z; this interaction probably directs the encapsidated genome to budding sites. Interacts with protein L; this interaction does not interfere with Z-L interaction. Interacts with host IKBKE (via Protein kinase domain); the interaction inhibits IKBKE kinase activity.

It is found in the virion. The protein resides in the host cytoplasm. In terms of biological role, encapsidates the genome, protecting it from nucleases. The encapsidated genomic RNA is termed the nucleocapsid (NC). Serves as template for viral transcription and replication. The increased presence of protein N in host cell does not seem to trigger the switch from transcription to replication as observed in other negative strain RNA viruses. Through the interaction with host IKBKE, strongly inhibits the phosphorylation and nuclear translocation of host IRF3, a protein involved in interferon activation pathway, leading to the inhibition of interferon-beta and IRF3-dependent promoters activation. Also encodes a functional 3'-5' exoribonuclease that degrades preferentially dsRNA substrates and thereby participates in the suppression of interferon induction. This is Nucleoprotein from Lymphocytic choriomeningitis virus (strain WE) (LCMV).